The primary structure comprises 184 residues: MSAVTKRSGSYGRTLGVGAVLVLVLATLAVVNVYTNLAPEMSGSQQSMLLSGLVSILLIVAVALLFVATIIGRERTAAVETLAAQARQIEQGELDVDLATNRTDDVGDIYRALAVLRDSEQLDRQHGVSAEVVAQYCETAVEISNGNDDSRLEENVDDPQLAELAMRFNEILDQRKRDAEIDSR.

The next 2 helical transmembrane spans lie at 14-34 and 52-72; these read TLGVGAVLVLVLATLAVVNVY and GLVSILLIVAVALLFVATIIG. The 53-residue stretch at 73–125 folds into the HAMP domain; the sequence is RERTAAVETLAAQARQIEQGELDVDLATNRTDDVGDIYRALAVLRDSEQLDRQ.

Belongs to the methyl-accepting chemotaxis (MCP) protein family. In terms of assembly, interacts with Xop2/SRM.

Its subcellular location is the membrane. Functionally, the HtrM-Xop2/SRM complex may interact with CheB or CheR and modulate their availability to Sop1 or Sop2. The chain is Probable sensory rhodopsin transducer (htrM) from Haloarcula marismortui (strain ATCC 43049 / DSM 3752 / JCM 8966 / VKM B-1809) (Halobacterium marismortui).